The sequence spans 114 residues: Hydrogenase maturation factor HypA (114 aa).

His2 contributes to the Ni(2+) binding site. Zn(2+) is bound by residues Cys70, Cys73, Cys86, and Cys89.

Belongs to the HypA/HybF family.

Its function is as follows. Involved in the maturation of [NiFe] hydrogenases. Required for nickel insertion into the metal center of the hydrogenase. The polypeptide is Hydrogenase maturation factor HypA (Rippkaea orientalis (strain PCC 8801 / RF-1) (Cyanothece sp. (strain PCC 8801))).